A 381-amino-acid polypeptide reads, in one-letter code: Heme A synthase (381 aa).

Residues Met1–Lys28 are disordered. The next 8 helical transmembrane spans lie at Ile36–Leu56, Val125–Thr145, Leu151–Ser171, Leu187–Leu207, Ser230–Ile250, Leu287–Trp307, Phe320–Val340, and Ala344–Leu364. Residue His292 participates in heme binding. His352 serves as a coordination point for heme.

It belongs to the COX15/CtaA family. Type 2 subfamily. In terms of assembly, interacts with CtaB. The cofactor is heme b.

Its subcellular location is the cell membrane. The enzyme catalyses Fe(II)-heme o + 2 A + H2O = Fe(II)-heme a + 2 AH2. Its pathway is porphyrin-containing compound metabolism; heme A biosynthesis; heme A from heme O: step 1/1. In terms of biological role, catalyzes the conversion of heme O to heme A by two successive hydroxylations of the methyl group at C8. The first hydroxylation forms heme I, the second hydroxylation results in an unstable dihydroxymethyl group, which spontaneously dehydrates, resulting in the formyl group of heme A. The protein is Heme A synthase of Ruegeria sp. (strain TM1040) (Silicibacter sp.).